The primary structure comprises 455 residues: Transcription factor mokH (455 aa).

The segment at 1–22 (MALSPVQDPPSHTDKTMPRRAF) is disordered. The zn(2)-C6 fungal-type DNA-binding region spans 26–58 (CDRCHAQKIKCIGSEGAVARASCQRCQQAGLRC). Disordered stretches follow at residues 68–113 (KLPK…DSSG) and 296–317 (LTPL…RSSV). Residues 75 to 88 (AESSPASSTAGLHT) are compositionally biased toward polar residues. The span at 89–113 (SSSDSSPPVPSDGLPLDLPGPDSSG) shows a compositional bias: low complexity.

The protein resides in the nucleus. Functionally, transcription factor that regulates the gene cluster that mediates the biosynthesis of monakolin K, also known as lovastatin, and which acts as a potent competitive inhibitor of HMG-CoA reductase. Monakolin K biosynthesis is performed in two stages. The first stage is catalyzed by the nonaketide synthase mokA, which belongs to type I polyketide synthases and catalyzes the iterative nine-step formation of the polyketide. This PKS stage is completed by the action of dehydrogenase mokE, which catalyzes the NADPH-dependent reduction of the unsaturated tetra-, penta- and heptaketide intermediates that arise during the mokA-mediated biosynthesis of the nonaketide chain and leads to dihydromonacolin L. Covalently bound dihydromonacolin L is released from mokA by the mokD esterase. Conversion of dihydromonacolin L into monacolin L and then monacolin J is subsequently performed with the participation of molecular oxygen and P450 monoogygenase mokC. Finally, mokF performs the conversion of monacoline J to monacoline K through the addition of the side-chain diketide moiety (2R)-2-methylbutanoate produced by the diketide synthase mokB. HMG-CoA reductase mokG may act as a down-regulator of monacolin K production. The chain is Transcription factor mokH from Monascus pilosus (Red mold).